The chain runs to 163 residues: Nucleotide-binding protein YajQ (163 aa).

It belongs to the YajQ family.

Nucleotide-binding protein. In Shigella flexneri, this protein is Nucleotide-binding protein YajQ.